Consider the following 221-residue polypeptide: UPF0502 protein PSPA7_1674 (221 aa).

It belongs to the UPF0502 family.

This is UPF0502 protein PSPA7_1674 from Pseudomonas paraeruginosa (strain DSM 24068 / PA7) (Pseudomonas aeruginosa (strain PA7)).